Consider the following 211-residue polypeptide: Tudor-interacting repair regulator protein (211 aa).

Residues lysine 10 and lysine 151 each participate in a glycyl lysine isopeptide (Lys-Gly) (interchain with G-Cter in ubiquitin) cross-link. Residues 118-205 (TLEQLHAVEI…TEKQKKALEK (88 aa)) are interaction with PXN.

This sequence belongs to the Nudix hydrolase family. TIRR subfamily. As to quaternary structure, homodimer. Interacts with TP53BP1 (via the Tudor-like domain); interaction is abolished following DNA damage and TP53BP1 phosphorylation by ATM. Interacts (via the cytoplasmic part) with SDC4. Interacts with TGFB1I1 and PXN.

Its subcellular location is the nucleus. Its function is as follows. Key regulator of TP53BP1 required to stabilize TP53BP1 and regulate its recruitment to chromatin. In absence of DNA damage, interacts with the tandem Tudor-like domain of TP53BP1, masking the region that binds histone H4 dimethylated at 'Lys-20' (H4K20me2), thereby preventing TP53BP1 recruitment to chromatin and maintaining TP53BP1 localization to the nucleus. Following DNA damage, ATM-induced phosphorylation of TP53BP1 and subsequent recruitment of RIF1 leads to dissociate NUDT16L1/TIRR from TP53BP1, unmasking the tandem Tudor-like domain and allowing recruitment of TP53BP1 to DNA double strand breaks (DSBs). Binds U8 snoRNA. This is Tudor-interacting repair regulator protein from Mus musculus (Mouse).